Reading from the N-terminus, the 378-residue chain is MSTPHIVVGVSGGVDSSVAAWKLAQQGEPIAGLFMQNWADDGSGDCRAEDDRRDAVAVCGVLGMPFHFRDFSGEYWSGVFEHFLAEYAAGRTPNPDVLCNREVKFKHFLDAAQALGAERIATGHYAQVAHRGRRWRLLRGADRDKDQSYFLHQLGQSQLAATLFPIGDLEKSTLRRIARDAGLPTHAKKDSTGICFIGERDFREFLGRYLPARTGEIRDPQGQRIAEHPGVFYFTLGQREGLNIGGVRGRAAAPWYVVGKDVASNVLYVDQDRDSPLLQSRWLQSEQAHWVTGAPPARRFSCTAQTRYRQPDEPCTVDVQDDGSVQVHFERPQRAVTPGQSLVLYDGKECLGGAVIAATDAPLERQLAGSSFSSEVVA.

ATP-binding positions include Gly-9–Ser-16 and Met-35. Positions Asn-94–Asp-96 are interaction with target base in tRNA. Residue Cys-99 is the Nucleophile of the active site. A disulfide bond links Cys-99 and Cys-195. Residue Gly-123 coordinates ATP. An interaction with tRNA region spans residues Lys-145–Gln-147. Residue Cys-195 is the Cysteine persulfide intermediate of the active site. An interaction with tRNA region spans residues Arg-307–Tyr-308.

This sequence belongs to the MnmA/TRMU family.

The protein resides in the cytoplasm. The catalysed reaction is S-sulfanyl-L-cysteinyl-[protein] + uridine(34) in tRNA + AH2 + ATP = 2-thiouridine(34) in tRNA + L-cysteinyl-[protein] + A + AMP + diphosphate + H(+). Functionally, catalyzes the 2-thiolation of uridine at the wobble position (U34) of tRNA, leading to the formation of s(2)U34. The chain is tRNA-specific 2-thiouridylase MnmA from Xanthomonas oryzae pv. oryzae (strain MAFF 311018).